The sequence spans 158 residues: Transcription elongation factor GreA (158 aa).

A coiled-coil region spans residues Gln-49–Gln-73.

Belongs to the GreA/GreB family.

Its function is as follows. Necessary for efficient RNA polymerase transcription elongation past template-encoded arresting sites. The arresting sites in DNA have the property of trapping a certain fraction of elongating RNA polymerases that pass through, resulting in locked ternary complexes. Cleavage of the nascent transcript by cleavage factors such as GreA or GreB allows the resumption of elongation from the new 3'terminus. GreA releases sequences of 2 to 3 nucleotides. The sequence is that of Transcription elongation factor GreA from Methylococcus capsulatus (strain ATCC 33009 / NCIMB 11132 / Bath).